A 212-amino-acid polypeptide reads, in one-letter code: Imidazole glycerol phosphate synthase subunit HisH (212 aa).

The Glutamine amidotransferase type-1 domain maps to Thr-3–Trp-212. Cys-81 serves as the catalytic Nucleophile. Catalysis depends on residues His-190 and Glu-192.

As to quaternary structure, heterodimer of HisH and HisF.

It localises to the cytoplasm. The catalysed reaction is 5-[(5-phospho-1-deoxy-D-ribulos-1-ylimino)methylamino]-1-(5-phospho-beta-D-ribosyl)imidazole-4-carboxamide + L-glutamine = D-erythro-1-(imidazol-4-yl)glycerol 3-phosphate + 5-amino-1-(5-phospho-beta-D-ribosyl)imidazole-4-carboxamide + L-glutamate + H(+). The enzyme catalyses L-glutamine + H2O = L-glutamate + NH4(+). It participates in amino-acid biosynthesis; L-histidine biosynthesis; L-histidine from 5-phospho-alpha-D-ribose 1-diphosphate: step 5/9. In terms of biological role, IGPS catalyzes the conversion of PRFAR and glutamine to IGP, AICAR and glutamate. The HisH subunit catalyzes the hydrolysis of glutamine to glutamate and ammonia as part of the synthesis of IGP and AICAR. The resulting ammonia molecule is channeled to the active site of HisF. This chain is Imidazole glycerol phosphate synthase subunit HisH, found in Pseudomonas savastanoi pv. phaseolicola (strain 1448A / Race 6) (Pseudomonas syringae pv. phaseolicola (strain 1448A / Race 6)).